The sequence spans 490 residues: MKPKLMYQELKVPAEEPANELPMNEIEAWKAAEKKARWVLLVLILAVVGFGALMTQLFLWEYGDLHLFGPNQRPAPCYDPCEAVLVESIPEGLDFPNASTGNPSTSQAWLGLLAGAHSSLDIASFYWTLTNNDTHTQEPSAQQGEEVLRQLQTLAPKGVNVRIAVSKPSGPQPQADLQALLQSGAQVRMVDMQKLTHGVLHTKFWVVDQTHFYLGSANMDWRSLTQVKELGVVMYNCSCLARDLTKIFEAYWFLGQAGSSIPSTWPRFYDTRYNQETPMEICLNGTPALAYLASAPPPLCPSGRTPDLKALLNVVDNARSFIYVAVMNYLPTLEFSHPHRFWPAIDDGLRRATYERGVKVRLLISCWGHSEPSMRAFLLSLAALRDNHTHSDIQVKLFVVPADEAQARIPYARVNHNKYMVTERATYIGTSNWSGNYFTETAGTSLLVTQNGRGGLRSQLEAIFLRDWDSPYSHDLDTSADSVGNACRLL.

Over 1–38 (MKPKLMYQELKVPAEEPANELPMNEIEAWKAAEKKARW) the chain is Cytoplasmic. The chain crosses the membrane as a helical; Signal-anchor for type II membrane protein span at residues 39-59 (VLLVLILAVVGFGALMTQLFL). The Lumenal portion of the chain corresponds to 60–490 (WEYGDLHLFG…DSVGNACRLL (431 aa)). Disulfide bonds link cysteine 77-cysteine 239 and cysteine 81-cysteine 237. N-linked (GlcNAc...) asparagine glycans are attached at residues asparagine 97 and asparagine 132. The 28-residue stretch at 196–223 (THGVLHTKFWVVDQTHFYLGSANMDWRS) folds into the PLD phosphodiesterase 1 domain. Residues histidine 201, lysine 203, and aspartate 208 contribute to the active site. Catalysis depends on histidine 201, which acts as the Proton donor. The phosphate site is built by histidine 201 and lysine 203. Asparagine 218 contributes to the phosphate binding site. Asparagine 236, asparagine 284, and asparagine 387 each carry an N-linked (GlcNAc...) asparagine glycan. Cysteine 366 and cysteine 487 are disulfide-bonded. Residues 411-437 (YARVNHNKYMVTERATYIGTSNWSGNY) enclose the PLD phosphodiesterase 2 domain. Histidine 416 is a binding site for phosphate. Histidine 416 serves as the catalytic Nucleophile. Phenylalanine 438 contacts Mg(2+).

The protein belongs to the phospholipase D family. Homodimer. Interacts with APP. N-glycosylated. Post-translationally, proteolytically processed to a soluble active form that is stable within endosomes and lysosomes. During transport through the secretory pathway becomes proteolysed by cysteine proteases, thereby releasing a stable soluble lysosomal lumenal polypeptide, whereas the transmembrane-bound fragment is rapidly degraded. Its transport route to lysosomes involves ubiquitination and the ESCRT complex. In terms of processing, ubiquitinated at N-terminus. Ubiquitination mediates sorting into lysosomes. In terms of tissue distribution, widely expressed. In the brain, high levels of expression are detected in the frontal, temporal and occipital cortices and hippocampus. Expressed at low level in corpus callosum. Expressed in plasmacytoid dendritic cells and monocytes (at protein level).

It is found in the endoplasmic reticulum membrane. It localises to the lysosome lumen. Its subcellular location is the early endosome membrane. The protein resides in the late endosome membrane. The protein localises to the golgi apparatus membrane. It is found in the endosome membrane. The enzyme catalyses Exonucleolytic cleavage in the 5'- to 3'-direction to yield nucleoside 3'-phosphates.. The catalysed reaction is a 5'-end 5'-dephospho-ribonucleotidyl-ribonucleotide-RNA + H2O = a ribonucleoside 3'-phosphate + a 5'-end dephospho-ribonucleoside-RNA + H(+). It carries out the reaction a ribonucleoside 3'-phosphate-2'-3'-cyclophospho-GMP + H2O = a ribonucleoside 3'-phosphate + 2',3'-cyclophospho-GMP + H(+). It catalyses the reaction a 5'-end 5'-dephospho-2'-deoxyribonucleotidyl-2'-deoxyribonucleotide in single-stranded DNA + H2O = a 5'-end dephospho-2'-deoxyribonucleoside in single-stranded DNA + a 2'-deoxyribonucleoside 3'-phosphate + H(+). The enzyme catalyses a 5'-end 5'-phospho-2'-deoxyribonucleotide in single-stranded DNA + H2O = a 5'-end 5'-dephospho-2'-deoxyribonucleotide in single-stranded DNA + phosphate. The catalysed reaction is a 3-lyso-sn-glycero-1-phospho-(3'-acyl-1'-sn-glycerol) + a 1-acyl-sn-glycerol = a 3-acyl-sn-glycero-1-phospho-(3'-acyl-1'-sn-glycerol) + glycerol. It carries out the reaction 3-lyso-sn-glycero-1-phospho-(3'-(9Z-octadecenoyl)-1'-sn-glycerol) + 1-(9Z-octadecenoyl)-sn-glycerol = 3-(9Z-octadecenoyl)-sn-glycero-1-phospho-(3'-(9Z-octadecenoyl)-1'-sn-glycerol) + glycerol. Its activity is regulated as follows. The exonuclease activity toward ssDNA substrate is Ca(2+) and Mg(2+)-independent, but it is inhibited by Fe(2+), Cu(2+) and to a lesser extent Zn(2+) ions. Functionally, 5'-&gt;3' exonuclease that hydrolyzes the phosphodiester bond of single-stranded DNA (ssDNA) and RNA molecules to form nucleoside 3'-monophosphates and 5'-end 5'-hydroxy deoxyribonucleotide/ribonucleotide fragments. Partially redundant with PLD4, can cleave all four nucleotides displaying higher efficiency for ssDNA and RNA fragments initiated with uridine and guanosine residues and lower efficiency for cytidine-initiated substrates. As a result, it does not always degrade polynucleotides to the single nucleotide level, it can stall at specific sites sparing certain fragments from exonucleolytic degradation. Processes self and pathogenic ssDNA and RNA molecules that reach the endolysosomal compartment via phagocytosis or autophagy and may serve as 'danger' signals for recognition by innate immune receptors such as toll-like receptors (TLRs). Degrades mitochondrial CpG-rich ssDNA fragments to prevent TLR9 activation and autoinflammatory response, but it can cleave viral RNA to generate ligands for TLR7 activation and initiate antiviral immune responses. In plasmacytoid dendritic cells, it cooperates with endonuclease RNASET2 to release 2',3'-cyclic guanosine monophosphate (2',3'-cGMP), a potent stimulatory ligand for TLR7. Produces 2',3'-cGMPs and cytidine-rich RNA fragments that occupy TLR7 ligand-binding pockets and trigger a signaling-competent state. Can exert polynucleotide phosphatase activity toward 5'-phosphorylated ssDNA substrates although at a slow rate. Transphosphatidylase that catalyzes the exchange with R to S stereo-inversion of the glycerol moiety between (S,R)-lysophosphatidylglycerol (LPG) and monoacylglycerol (MAG) substrates to yield (S,S)-bis(monoacylglycero)phosphate (BMP). Can synthesize a variety of (S,S)-BMPs representing the main phospholipid constituent of lysosomal intralumenal vesicle (ILV) membranes that bind acid hydrolases for lipid degradation. Regulates the homeostasis and interorganellar communication of the endolysosomal system with an overall impact on cellular removal of dysfunctional organelles via autophagy as well as proper protein and lipid turnover. May play a role in myotube formation in response to ER stress. The protein is 5'-3' exonuclease PLD3 of Homo sapiens (Human).